We begin with the raw amino-acid sequence, 325 residues long: Small ribosomal subunit protein RACK1 (325 aa).

WD repeat units lie at residues 13-44, 61-91, 103-133, 147-179, 191-221, 232-261, and 291-321; these read AHTDVVTAIATPIDNSDMIVTASRDKSIILWH, GHSHFVQDVVLSSDGQFALSGSWDGELRLWD, GHTKDVLSVAFSIDNRQIVSASRDRTIKLWN, AHSDWVSCVRFSPSTPQPTIVSASWDRTVKVWN, GHSGYVNTVAVSPDGSLCASGGKDGVILLWD, DAGSIIHALCFSPNRYWLCAATESSIKIWD, and KKVIYCTSLNWSADGSTLFSGYTDGVVRVWG.

This sequence belongs to the WD repeat G protein beta family. Ribosomal protein RACK1 subfamily.

In terms of biological role, plays a role in hormone-mediated cell division. This chain is Small ribosomal subunit protein RACK1 (GB1), found in Medicago sativa (Alfalfa).